The sequence spans 440 residues: C4-dicarboxylate transport protein (440 aa).

9 consecutive transmembrane segments (helical) span residues 7 to 29 (LYKS…GHYY), 49 to 66 (MVIA…IAGM), 79 to 101 (ALLY…VNVV), 143 to 165 (VVGA…FGFA), 186 to 208 (VMFN…AMAF), 221 to 243 (LGYL…LGGI), 291 to 313 (VVGL…YLTM), 328 to 350 (ITHQ…GVTG), and 355 to 377 (VLAA…ILGI). Residues 419–440 (GGAPLIDTRPTDDLGVAEGPAR) are disordered.

It belongs to the dicarboxylate/amino acid:cation symporter (DAACS) (TC 2.A.23) family.

It localises to the cell inner membrane. Responsible for the transport of dicarboxylates such as succinate, fumarate, and malate from the periplasm across the membrane. The protein is C4-dicarboxylate transport protein of Pseudomonas putida (strain ATCC 47054 / DSM 6125 / CFBP 8728 / NCIMB 11950 / KT2440).